The sequence spans 171 residues: Large ribosomal subunit protein bL17 (171 aa).

The segment at 130 to 171 (PGYKKSKGKKATKAKGKKAKATPAAEAAAAATTEAAPAEEKK) is disordered. The segment covering 133–149 (KKSKGKKATKAKGKKAK) has biased composition (basic residues). Low complexity predominate over residues 150–165 (ATPAAEAAAAATTEAA).

Belongs to the bacterial ribosomal protein bL17 family. In terms of assembly, part of the 50S ribosomal subunit. Contacts protein L32.

The chain is Large ribosomal subunit protein bL17 from Opitutus terrae (strain DSM 11246 / JCM 15787 / PB90-1).